The primary structure comprises 200 residues: uncharacterized protein (200 aa).

This is an uncharacterized protein from Xylella fastidiosa (strain 9a5c).